We begin with the raw amino-acid sequence, 152 residues long: uncharacterized protein (152 aa).

Transmembrane regions (helical) follow at residues 2–22 (GVVF…LKLM), 33–53 (LKMI…WLIM), 58–78 (FLIE…LIYL), 97–117 (FMGN…IEYV), and 122–142 (IASP…FFNC).

It localises to the cell membrane. This is an uncharacterized protein from Methanocaldococcus jannaschii (strain ATCC 43067 / DSM 2661 / JAL-1 / JCM 10045 / NBRC 100440) (Methanococcus jannaschii).